A 224-amino-acid polypeptide reads, in one-letter code: PKHD-type hydroxylase Sbal195_0750 (224 aa).

The region spanning 78-176 (QFYPPLFNRY…RTAAFMWLQS (99 aa)) is the Fe2OG dioxygenase domain. Fe cation contacts are provided by His-96, Asp-98, and His-157. 2-oxoglutarate is bound at residue Arg-167.

The cofactor is Fe(2+). It depends on L-ascorbate as a cofactor.

The polypeptide is PKHD-type hydroxylase Sbal195_0750 (Shewanella baltica (strain OS195)).